Consider the following 367-residue polypeptide: BTB/POZ domain-containing protein Tiwaz (367 aa).

Disordered stretches follow at residues Leu16–Leu46 and Ser62–Thr87. Residues Cys28–Asp45 show a composition bias toward basic and acidic residues. The BTB domain occupies Ala135–Glu205. Residues Gly240–Ser261 form a disordered region.

Functionally, functions with the transcription factor TfAP-2 to regulate octopamine neuronal signaling pathways that control behaviors such as male aggression, male mating, and the initiation of feeding. Required for TfAP-2 transcriptional activity in octopaminergic neurons. Functions with TfAP-2 to regulate expression of genes which are involved in promoting octopamine production and secretion from octopaminergic neurons, such as Tbh and Vmat. Octopamine then modulates feeding and male aggression by regulating the expression of the satiation hormone Dsk in insulin-producing cells (IPCs). Functions with octopamine and Dsk as part of a negative feedback loop to prevent overeating; acts with TfAP-2 to regulate octopamine signaling pathways that initiate feeding, then octopamine activates expression of Dsk which inhibits consummatory behavior. May also be involved in negatively regulating nociception in larvae to prevent spontaneous pain and hyperalgesia. This is BTB/POZ domain-containing protein Tiwaz from Drosophila melanogaster (Fruit fly).